Reading from the N-terminus, the 228-residue chain is Geranylgeranylglyceryl phosphate synthase (228 aa).

Lys13 provides a ligand contact to sn-glycerol 1-phosphate. 2 residues coordinate Mg(2+): Asp15 and Thr41. Sn-glycerol 1-phosphate-binding positions include 159–164 (YVEYSG), Gly189, and 209–210 (GN).

The protein belongs to the GGGP/HepGP synthase family. Group I subfamily. It depends on Mg(2+) as a cofactor.

The protein localises to the cytoplasm. The catalysed reaction is sn-glycerol 1-phosphate + (2E,6E,10E)-geranylgeranyl diphosphate = sn-3-O-(geranylgeranyl)glycerol 1-phosphate + diphosphate. It participates in membrane lipid metabolism; glycerophospholipid metabolism. Functionally, prenyltransferase that catalyzes the transfer of the geranylgeranyl moiety of geranylgeranyl diphosphate (GGPP) to the C3 hydroxyl of sn-glycerol-1-phosphate (G1P). This reaction is the first ether-bond-formation step in the biosynthesis of archaeal membrane lipids. This Methanosphaerula palustris (strain ATCC BAA-1556 / DSM 19958 / E1-9c) protein is Geranylgeranylglyceryl phosphate synthase.